We begin with the raw amino-acid sequence, 181 residues long: Ribulose bisphosphate carboxylase small subunit 2B, chloroplastic (181 aa).

The N-terminal 54 residues, 1–54 (MASSMFSSTAVVTSPAQATMVAPFTGLKSSASFPVTRKANNDITSITSNGGRVS), are a transit peptide targeting the chloroplast.

Belongs to the RuBisCO small chain family. Heterohexadecamer of 8 large and 8 small subunits.

The protein localises to the plastid. It localises to the chloroplast. Functionally, ruBisCO catalyzes two reactions: the carboxylation of D-ribulose 1,5-bisphosphate, the primary event in carbon dioxide fixation, as well as the oxidative fragmentation of the pentose substrate. Both reactions occur simultaneously and in competition at the same active site. Although the small subunit is not catalytic it is essential for maximal activity. The chain is Ribulose bisphosphate carboxylase small subunit 2B, chloroplastic (RBCS-2B) from Arabidopsis thaliana (Mouse-ear cress).